The following is a 261-amino-acid chain: MSQSLHLTTRGSVLEIILDRPKANAIDAKTSHEMGEVFMRFRDDPSLRVAIITGAGERFFCAGWDLKAAAEGEAPDADFGAGGFAGLTELFDLNKPVIAAINGYAFGGGFELALAADMIICSDNASFALPEAQLGIVPDSGGVLRLPKRLPPAIVNEMLMTGRRMNAQEALRWGIANRVVSATELMDSARELADQIANSAPLAVAALKEIYRATSELSIEEGYKLMRSGVLKYYPRVLHSEDALEGPLAFAEKRSPEWKGR.

The active-site Nucleophile is the glutamate 111. Glutamate 131 (proton acceptor) is an active-site residue.

The protein belongs to the enoyl-CoA hydratase/isomerase family.

The enzyme catalyses (R)-carnitinyl-CoA = crotonobetainyl-CoA + H2O. Its pathway is amine and polyamine metabolism; carnitine metabolism. Catalyzes the reversible dehydration of L-carnitinyl-CoA to crotonobetainyl-CoA. The sequence is that of Carnitinyl-CoA dehydratase from Proteus mirabilis (strain HI4320).